A 468-amino-acid chain; its full sequence is Acyltransferase R4 (468 aa).

A run of 7 helical transmembrane segments spans residues 21 to 41 (GILS…LGYD), 70 to 90 (LFTI…CLFF), 133 to 153 (LNLL…TGFF), 252 to 272 (FLAA…PLFW), 308 to 328 (DPFG…YPTW), 388 to 408 (FAVY…LFSW), and 423 to 443 (IGFG…AAMF).

It belongs to the acyltransferase 3 family.

It is found in the membrane. It functions in the pathway secondary metabolite biosynthesis. Acyltransferase; part of the gene cluster that mediates the biosynthesis of squalestatin S1 (SQS1, also known as zaragozic acid A), a heavily oxidized fungal polyketide that offers potent cholesterol lowering activity by targeting squalene synthase (SS). SQS1 is composed of a 2,8-dioxobicyclic[3.2.1]octane-3,4,5-tricarboxyclic acid core that is connected to two lipophilic polyketide arms. These initial steps feature the priming of an unusual benzoic acid starter unit onto the highly reducing polyketide synthase pks2, followed by oxaloacetate extension and product release to generate a tricarboxylic acid containing product. The phenylalanine ammonia lyase (PAL) M7 and the acyl-CoA ligase M9 are involved in transforming phenylalanine into benzoyl-CoA. The citrate synthase-like protein R3 is involved in connecting the C-alpha-carbons of the hexaketide chain and oxaloacetate to afford the tricarboxylic acid unit. The potential hydrolytic enzymes, M8 and M10, are in close proximity to pks2 and may participate in product release. On the other side, the tetraketide arm is synthesized by a the squalestatin tetraketide synthase pks1 and enzymatically esterified to the core in the last biosynthetic step, by the acetyltransferase M4. The biosynthesis of the tetraketide must involve 3 rounds of chain extension. After the first and second rounds methyl-transfer occurs, and in all rounds of extension the ketoreductase and dehydratase are active. The enoyl reductase and C-MeT of pks1 are not active in the final round of extension. The acetyltransferase M4 appears to have a broad substrate selectivity for its acyl CoA substrate, allowing the in vitro synthesis of novel squalestatins. The biosynthesis of SQS1 requires several oxidative steps likely performed by oxidoreductases M1, R1 and R2. Finally, in support of the identification of the cluster as being responsible for SQS1 production, the cluster contains a gene encoding a putative squalene synthase (SS) R6, suggesting a likely mechanism for self-resistance. The polypeptide is Acyltransferase R4 (Phoma sp. (strain ATCC 20986 / MF5453)).